Consider the following 387-residue polypeptide: Bifunctional chorismate mutase/prephenate dehydratase (387 aa).

Residues 1-92 (MNPDNPLLAL…DSVLTQQALL (92 aa)) enclose the Chorismate mutase domain. Arginine 11, arginine 28, lysine 39, aspartate 48, glutamate 52, serine 84, and glutamine 88 together coordinate substrate. Positions 105 to 285 (RIAFLGPKGS…NHTRFIVLAR (181 aa)) constitute a Prephenate dehydratase domain. The ACT domain maps to 299-376 (TLIMATGQQA…RSLKVLGCYP (78 aa)).

It is found in the cytoplasm. The catalysed reaction is chorismate = prephenate. It carries out the reaction prephenate + H(+) = 3-phenylpyruvate + CO2 + H2O. The protein operates within amino-acid biosynthesis; L-phenylalanine biosynthesis; phenylpyruvate from prephenate: step 1/1. It functions in the pathway metabolic intermediate biosynthesis; prephenate biosynthesis; prephenate from chorismate: step 1/1. Its function is as follows. Catalyzes the Claisen rearrangement of chorismate to prephenate and the decarboxylation/dehydration of prephenate to phenylpyruvate. This chain is Bifunctional chorismate mutase/prephenate dehydratase (pheA), found in Enterobacter agglomerans (Erwinia herbicola).